The chain runs to 1298 residues: Phosphoribosylformylglycinamidine synthase (1298 aa).

The disordered stretch occupies residues 303-327 (FPGAATGSGGEIRDEGATGRGAKPK). ATP-binding positions include 305 to 316 (GAATGSGGEIRD), 384 to 386 (TGY), and A676. Residues D677, E716, N720, and D884 each contribute to the Mg(2+) site. S886 provides a ligand contact to ATP. The 254-residue stretch at 1045 to 1298 (VAVLREQGVN…MFRNARAWVN (254 aa)) folds into the Glutamine amidotransferase type-1 domain. The active-site Nucleophile is the C1138. Residues H1263 and E1265 contribute to the active site.

In the N-terminal section; belongs to the FGAMS family. Monomer.

It localises to the cytoplasm. The enzyme catalyses N(2)-formyl-N(1)-(5-phospho-beta-D-ribosyl)glycinamide + L-glutamine + ATP + H2O = 2-formamido-N(1)-(5-O-phospho-beta-D-ribosyl)acetamidine + L-glutamate + ADP + phosphate + H(+). It participates in purine metabolism; IMP biosynthesis via de novo pathway; 5-amino-1-(5-phospho-D-ribosyl)imidazole from N(2)-formyl-N(1)-(5-phospho-D-ribosyl)glycinamide: step 1/2. In terms of biological role, phosphoribosylformylglycinamidine synthase involved in the purines biosynthetic pathway. Catalyzes the ATP-dependent conversion of formylglycinamide ribonucleotide (FGAR) and glutamine to yield formylglycinamidine ribonucleotide (FGAM) and glutamate. This is Phosphoribosylformylglycinamidine synthase from Pseudomonas syringae pv. tomato (strain ATCC BAA-871 / DC3000).